We begin with the raw amino-acid sequence, 468 residues long: Ribulose bisphosphate carboxylase large chain (468 aa).

Position 5 is an N6,N6,N6-trimethyllysine (lysine 5). Residues asparagine 114 and threonine 164 each coordinate substrate. Lysine 166 serves as the catalytic Proton acceptor. Lysine 168 contributes to the substrate binding site. 3 residues coordinate Mg(2+): lysine 192, aspartate 194, and glutamate 195. The residue at position 192 (lysine 192) is an N6-carboxylysine. Residue histidine 285 is the Proton acceptor of the active site. Positions 286, 318, and 370 each coordinate substrate.

It belongs to the RuBisCO large chain family. Type I subfamily. As to quaternary structure, heterohexadecamer of 8 large chains and 8 small chains; disulfide-linked. The disulfide link is formed within the large subunit homodimers. The cofactor is Mg(2+). The disulfide bond which can form in the large chain dimeric partners within the hexadecamer appears to be associated with oxidative stress and protein turnover.

The protein resides in the plastid. Its subcellular location is the chloroplast. The catalysed reaction is 2 (2R)-3-phosphoglycerate + 2 H(+) = D-ribulose 1,5-bisphosphate + CO2 + H2O. It catalyses the reaction D-ribulose 1,5-bisphosphate + O2 = 2-phosphoglycolate + (2R)-3-phosphoglycerate + 2 H(+). In terms of biological role, ruBisCO catalyzes two reactions: the carboxylation of D-ribulose 1,5-bisphosphate, the primary event in carbon dioxide fixation, as well as the oxidative fragmentation of the pentose substrate in the photorespiration process. Both reactions occur simultaneously and in competition at the same active site. This Anthocercis viscosa (Sticky tailflower) protein is Ribulose bisphosphate carboxylase large chain.